Consider the following 372-residue polypeptide: Mevalonate 3,5-bisphosphate decarboxylase (372 aa).

The protein belongs to the mevalonate 3,5-bisphosphate decarboxylase family. As to quaternary structure, homodimer.

The enzyme catalyses (R)-3,5-bisphosphomevalonate + H(+) = isopentenyl phosphate + phosphate + CO2. It participates in isoprenoid biosynthesis; isopentenyl diphosphate biosynthesis via mevalonate pathway. In terms of biological role, catalyzes the ATP-independent decarboxylation of (R)-mevalonate 3,5-bisphosphate to isopentenyl phosphate. Functions in an alternative mevalonate pathway, only present in extreme acidophiles of the Thermoplasmatales order, which passes through mevalonate 3-phosphate rather than mevalonate 5-phosphate. The chain is Mevalonate 3,5-bisphosphate decarboxylase from Thermoplasma volcanium (strain ATCC 51530 / DSM 4299 / JCM 9571 / NBRC 15438 / GSS1).